Consider the following 297-residue polypeptide: Putative S-adenosyl-L-methionine-dependent methyltransferase Mmcs_1044 (297 aa).

S-adenosyl-L-methionine-binding positions include D124 and 153-154 (DL).

The protein belongs to the UPF0677 family.

Its function is as follows. Exhibits S-adenosyl-L-methionine-dependent methyltransferase activity. The sequence is that of Putative S-adenosyl-L-methionine-dependent methyltransferase Mmcs_1044 from Mycobacterium sp. (strain MCS).